Here is a 129-residue protein sequence, read N- to C-terminus: Azurin-1 (129 aa).

Residues 1 to 129 form the Plastocyanin-like domain; the sequence is AECSVDIAGN…LMKGVLKLVD (129 aa). C3 and C26 form a disulfide bridge. Cu cation is bound by residues H46, C112, H117, and M121.

The protein resides in the periplasm. Functionally, transfers electrons from cytochrome c551 to cytochrome oxidase. This is Azurin-1 from Alcaligenes xylosoxydans xylosoxydans (Achromobacter xylosoxidans).